Consider the following 99-residue polypeptide: Putative septation protein SpoVG (99 aa).

This sequence belongs to the SpoVG family.

Functionally, could be involved in septation. This Myxococcus xanthus (strain DK1622) protein is Putative septation protein SpoVG.